The sequence spans 893 residues: MARYTQRPENALKRANEFIEVGKPLRALDTLQEVFRNKRWNYTYSETVIEPLMFKYLYLCVELKKSHIAKEGLFQYRNMFQLVNVNSLENVIRGYLKMAEEHTEAAQAQSSAAVAVLELDDLDNIATPESILMSAVCGEDAQDRSDRTILLPWVKFLWESYCQCLELLRVNTHCEALYHDIARMAFQFCLKYNRKSEFRRLCDKLRKHLEDICKSNNQTTGVSITKPETQQLCLDTRLYLLDSAIQMELWQEAYKAIEDIHGLMAMSKKTPVPKTMANYYQKLAMVFSKAGNQLFHAAALLKLFQLTRELKKNLTKEDLQRMAAHVLLATLSIPLPSAHPEFDRFIEADKSPLEKAQKLAVLLGLPQPPTRVSLIRDVVRLNVPNLVSDEFRNLYNWLEVDFNPLNLCKRIQSIVDTIESTEKENTLLTPYIQSLKDVTIMRLIRQISQVYESIEFKRLLELAPFCNIFELEKLLVESVRHNDMQIRIDHQRNSIFFGTDLTESQREYRPDGPALQSMPSEQIRSQLVNMSTVLTRAVSVVYPNRERDQRAKLRTQMVQHYHEIKDREHQRILQRQKIIEDRKEFIEKQNNARELEEARRHEDESRKAKQAEQKRLEQEQEKRERKRHENEIQAIKEKSLKEKVQQISQTAHGKKMLSKLDEEGIKKLDAEQIAMRESEELQRERKELQSKIKSQEKKIDYFERAKRLEEIPLFEKYLAEKNVKDKEFWESTEQTRIELDIAERKDAVAQQARLQRMYPDRDEYLNALKKERASLYVEKLKKFEIALAEERKKRLADRIVRRREERRQAYLRAKEEERFRKEEEIRHAREAEERAAAEARRLEREAEDEKRRQQYEKQRAKEEEAERKIQEDRDRLAREVAVEPSTCFSRRRQ.

In terms of domain architecture, PCI spans L319–T502. 2 coiled-coil regions span residues Q576–R707 and E784–A881. 2 disordered regions span residues A592–A634 and A837–Q893. Residues A837–A881 are compositionally biased toward basic and acidic residues.

Belongs to the eIF-3 subunit A family. As to quaternary structure, component of the eukaryotic translation initiation factor 3 (eIF-3) complex. The eIF-3 complex interacts with pix.

The protein localises to the cytoplasm. Its function is as follows. RNA-binding component of the eukaryotic translation initiation factor 3 (eIF-3) complex, which is involved in protein synthesis of a specialized repertoire of mRNAs and, together with other initiation factors, stimulates binding of mRNA and methionyl-tRNAi to the 40S ribosome. The eIF-3 complex specifically targets and initiates translation of a subset of mRNAs involved in cell proliferation. This is Eukaryotic translation initiation factor 3 subunit A from Drosophila grimshawi (Hawaiian fruit fly).